We begin with the raw amino-acid sequence, 353 residues long: Uroporphyrinogen decarboxylase (353 aa).

Residues 26-30 (RQAGR), aspartate 75, tyrosine 161, serine 216, and histidine 332 contribute to the substrate site.

Belongs to the uroporphyrinogen decarboxylase family. Homodimer.

Its subcellular location is the cytoplasm. The enzyme catalyses uroporphyrinogen III + 4 H(+) = coproporphyrinogen III + 4 CO2. It participates in porphyrin-containing compound metabolism; protoporphyrin-IX biosynthesis; coproporphyrinogen-III from 5-aminolevulinate: step 4/4. Its function is as follows. Catalyzes the decarboxylation of four acetate groups of uroporphyrinogen-III to yield coproporphyrinogen-III. This chain is Uroporphyrinogen decarboxylase, found in Gluconacetobacter diazotrophicus (strain ATCC 49037 / DSM 5601 / CCUG 37298 / CIP 103539 / LMG 7603 / PAl5).